Here is a 336-residue protein sequence, read N- to C-terminus: DNA-directed RNA polymerase subunit alpha (336 aa).

Positions 1–232 (MIQKNWQELI…DQLGVFVNFD (232 aa)) are alpha N-terminal domain (alpha-NTD). An alpha C-terminal domain (alpha-CTD) region spans residues 248 to 336 (FNPALLKKVD…DLAKRYEDQY (89 aa)).

This sequence belongs to the RNA polymerase alpha chain family. Homodimer. The RNAP catalytic core consists of 2 alpha, 1 beta, 1 beta' and 1 omega subunit. When a sigma factor is associated with the core the holoenzyme is formed, which can initiate transcription.

It carries out the reaction RNA(n) + a ribonucleoside 5'-triphosphate = RNA(n+1) + diphosphate. DNA-dependent RNA polymerase catalyzes the transcription of DNA into RNA using the four ribonucleoside triphosphates as substrates. This Rhizobium rhizogenes (strain K84 / ATCC BAA-868) (Agrobacterium radiobacter) protein is DNA-directed RNA polymerase subunit alpha.